Reading from the N-terminus, the 2415-residue chain is Spectrin alpha chain (2415 aa).

Spectrin repeat units follow at residues 48-150, 154-254, 258-362, 366-464, 471-574, 577-679, 683-784, 788-890, and 894-963; these read RFQY…KLQQ, LVQF…QEKL, HEIQ…KLDE, LHRF…DRRI, DLQL…LLED, RYQQ…KLNE, QQQF…QHLL, QVQQ…QDLD, and QAHQ…RQQE. Positions 970–1029 constitute an SH3 domain; sequence TGKECVVALYDYTEKSPREVSMKKGDVLTLLNSNNKDWWKVEVNDRQGFVPAAYIKKIDA. Residues Ser1032 and Ser1034 each carry the phosphoserine modification. Spectrin repeat units follow at residues 1079–1177, 1181–1284, 1287–1391, 1394–1496, 1500–1604, 1608–1710, 1714–1816, 1820–1921, 1926–2028, 2040–2141, and 2154–2252; these read VREA…ASQL, HEVQ…EKLL, YDLQ…QLEQ, DLQL…SRLG, TLQQ…KLKE, QRTY…RLNE, LHQF…KLDE, YQQF…GALL, YLQF…DRLL, LYLT…DGEL, and LRKE…NLEQ. 2 consecutive EF-hand domains span residues 2265–2300 and 2308–2343; these read DSLK…LGYD and QPDP…KETE. Residues Asp2278, Asp2280, Ser2282, Lys2284, Glu2289, Asp2321, Asn2323, Asp2325, Tyr2327, and Glu2332 each contribute to the Ca(2+) site.

Belongs to the spectrin family. Native spectrin molecule is a tetramer composed of two antiparallel heterodimers joined head to head so that each end of the native molecule includes the C-terminus of the alpha subunit and the N-terminus of the beta subunit. Interacts with calmodulin in a calcium-dependent manner, interacts with F-actin and also interacts with Lva. Interacts with Ten-m. In terms of tissue distribution, a substantial pool of maternal protein in the egg undergoes dynamic changes in distribution early in embryogenesis. In gastrulated embryo, the highest level of protein is found in the respiratory tract cells and the lowest in parts of the forming gut.

It is found in the cytoplasm. Its subcellular location is the cytoskeleton. The protein localises to the golgi apparatus. The protein resides in the cell projection. It localises to the cilium. It is found in the flagellum. Its function is as follows. Spectrin is the major constituent of the cytoskeletal network underlying the erythrocyte plasma membrane. It associates with band 4.1 and actin to form the cytoskeletal superstructure of the erythrocyte plasma membrane. Essential for larval survival and development. Stabilizes cell to cell interactions that are critical for the maintenance of cell shape and subcellular organization within embryonic tissues. Lva and spectrin may form a Golgi-based scaffold that mediates interaction of Golgi bodies with microtubules and facilitates Golgi-derived membrane secretion required for the formation of furrows during cellularization. This chain is Spectrin alpha chain (alpha-Spec), found in Drosophila melanogaster (Fruit fly).